Consider the following 551-residue polypeptide: HTH-type transcriptional regulator SgrR (551 aa).

Residues 1–116 enclose the HTH marR-type domain; it reads MPSARLQQQF…LVSHLGRSFR (116 aa). The segment at residues 26–49 is a DNA-binding region (H-T-H motif); the sequence is LNELAALLSCSRRHMRTLLNTMQD. The interval 163 to 492 is solute-binding; the sequence is ELEADIAHHW…IDWQADAARW (330 aa).

In terms of biological role, activates the small RNA gene sgrS under glucose-phosphate stress conditions as well as yfdZ. Represses its own transcription under both stress and non-stress conditions. Might act as a sensor of the intracellular accumulation of phosphoglucose by binding these molecules in its C-terminal solute-binding domain. The chain is HTH-type transcriptional regulator SgrR from Escherichia coli O6:K15:H31 (strain 536 / UPEC).